The chain runs to 1306 residues: Receptor-type tyrosine-protein phosphatase C (1306 aa).

Residues 1–25 form the signal peptide; the sequence is MTMYLWLKLLAFGFAFLDTEVFVTG. Residues 26 to 577 lie on the Extracellular side of the membrane; it reads QSPTPSPTGL…LHHSTSYNSK (552 aa). Residues 28–163 form a disordered region; that stretch reads PTPSPTGLTT…TASTFPTDPV (136 aa). 2 stretches are compositionally biased toward polar residues: residues 52–61 and 70–131; these read THTTAFSPAS and SETT…SGSA. N-linked (GlcNAc...) asparagine glycans are attached at residues Asn-80, Asn-92, Asn-97, Asn-186, Asn-192, Asn-199, Asn-234, Asn-262, Asn-272, and Asn-278. A glycan (N-linked (GlcNAc...) asparagine; atypical) is linked at Asn-286. N-linked (GlcNAc...) asparagine glycosylation is found at Asn-337, Asn-380, Asn-421, Asn-470, Asn-490, and Asn-531. Fibronectin type-III domains are found at residues 391-483 and 484-576; these read SPGE…TKSA and PPSQ…SYNS. The chain crosses the membrane as a helical span at residues 578-598; the sequence is ALIAFLAFLIIVTSIALLVVL. At 599–1306 the chain is on the cytoplasmic side; it reads YKIYDLHKKR…PASPALNQGS (708 aa). 2 consecutive Tyrosine-protein phosphatase domains span residues 653-912 and 944-1228; these read FLAE…LVEY and LEAE…IAST. Tyr-683 carries the post-translational modification Phosphotyrosine. Residues Asp-821, 853-859, and Gln-897 each bind substrate; that span reads CSAGVGR. Residue Cys-853 is the Phosphocysteine intermediate of the active site. Phosphoserine occurs at positions 975, 994, 997, 1001, 1004, 1005, and 1009. Positions 993-1014 are disordered; it reads MSKESEHDSDESSDDDSDSEEP. Over residues 999 to 1012 the composition is skewed to acidic residues; it reads HDSDESSDDDSDSE. Residue Cys-1169 is the Phosphocysteine intermediate of the active site. Residues 1261 to 1306 form a disordered region; sequence CVNPLGAPEKLPEAKEQAEGSEPTSGTEGPEHSVNGPASPALNQGS. Ser-1299 bears the Phosphoserine mark.

It belongs to the protein-tyrosine phosphatase family. Receptor class 1/6 subfamily. As to quaternary structure, binds GANAB and PRKCSH. Interacts with SKAP1. Interacts with DPP4; the interaction is enhanced in an interleukin-12-dependent manner in activated lymphocytes. Interacts with CD53; this interaction stabilizes PTPRC on the membrane and is required for optimal phosphatase activity. In terms of assembly, interacts with CLEC10A. Does not interact with CLEC10A. As to quaternary structure, (Microbial infection) Interacts with human cytomegalovirus protein UL11; the interaction is required for binding of UL11 to T-cells. Heavily N- and O-glycosylated. As to expression, isoform 1: Detected in thymocytes. Isoform 2: Detected in thymocytes. Isoform 3: Detected in thymocytes. Isoform 4: Not detected in thymocytes. Isoform 5: Detected in thymocytes. Isoform 6: Not detected in thymocytes. Isoform 7: Detected in thymocytes. Isoform 8: Not detected in thymocytes.

It is found in the cell membrane. It localises to the membrane raft. The protein localises to the synapse. The catalysed reaction is O-phospho-L-tyrosyl-[protein] + H2O = L-tyrosyl-[protein] + phosphate. In terms of biological role, protein tyrosine-protein phosphatase required for T-cell activation through the antigen receptor. Acts as a positive regulator of T-cell coactivation upon binding to DPP4. The first PTPase domain has enzymatic activity, while the second one seems to affect the substrate specificity of the first one. Upon T-cell activation, recruits and dephosphorylates SKAP1 and FYN. Dephosphorylates LYN, and thereby modulates LYN activity. Interacts with CLEC10A at antigen presenting cell-T cell contact; CLEC10A on immature dendritic cells recognizes Tn antigen-carrying PTPRC/CD45 receptor on effector T cells and modulates T cell activation threshold to limit autoreactivity. Its function is as follows. (Microbial infection) Acts as a receptor for human cytomegalovirus protein UL11 and mediates binding of UL11 to T-cells, leading to reduced induction of tyrosine phosphorylation of multiple signaling proteins upon T-cell receptor stimulation and impaired T-cell proliferation. This Homo sapiens (Human) protein is Receptor-type tyrosine-protein phosphatase C.